A 158-amino-acid chain; its full sequence is Protein-export protein SecB (158 aa).

It belongs to the SecB family. Homotetramer, a dimer of dimers. One homotetramer interacts with 1 SecA dimer.

Its subcellular location is the cytoplasm. Functionally, one of the proteins required for the normal export of preproteins out of the cell cytoplasm. It is a molecular chaperone that binds to a subset of precursor proteins, maintaining them in a translocation-competent state. It also specifically binds to its receptor SecA. This is Protein-export protein SecB from Bartonella quintana (strain Toulouse) (Rochalimaea quintana).